The following is a 282-amino-acid chain: Large ribosomal subunit protein uL2 (282 aa).

The tract at residues 215–282 (RHKGIRPTVR…IIRSRKETKK (68 aa)) is disordered. Over residues 263 to 282 (RNPKKPSTKLIIRSRKETKK) the composition is skewed to basic residues.

The protein belongs to the universal ribosomal protein uL2 family. In terms of assembly, part of the 50S ribosomal subunit. Forms a bridge to the 30S subunit in the 70S ribosome.

Functionally, one of the primary rRNA binding proteins. Required for association of the 30S and 50S subunits to form the 70S ribosome, for tRNA binding and peptide bond formation. It has been suggested to have peptidyltransferase activity; this is somewhat controversial. Makes several contacts with the 16S rRNA in the 70S ribosome. This Mesomycoplasma hyopneumoniae (strain J / ATCC 25934 / NCTC 10110) (Mycoplasma hyopneumoniae) protein is Large ribosomal subunit protein uL2.